The primary structure comprises 416 residues: uncharacterized protein (416 aa).

The disordered stretch occupies residues 341-360 (EDREKGSQHTNNTHHHKRNL).

This is an uncharacterized protein from Human cytomegalovirus (strain AD169) (HHV-5).